A 101-amino-acid chain; its full sequence is Enhancer of yellow 2 transcription factor (101 aa).

Belongs to the ENY2 family. Component of the nuclear pore complex (NPC)-associated AMEX complex (anchoring and mRNA export complex), composed of at least e(y)2 and xmas-2. Component of the SAGA transcription coactivator-HAT complexes, at least composed of Ada2b, e(y)2, Pcaf/Gcn5, Taf10 and Nipped-A/Trrap. Within the SAGA complex, e(y)2, Sgf11, and not/nonstop form an additional subcomplex of SAGA called the DUB module (deubiquitination module). Component of the THO complex, composed of at least e(y)2, HPR1, THO2, THOC5, THOC6 and THOC7. Interacts with e(y)1. Interacts with su(Hw) (via zinc fingers). Interacts with xmas-2; required for localization to the nuclear periphery. Interacts with the nuclear pore complex (NPC).

It localises to the nucleus. It is found in the nucleoplasm. The protein resides in the cytoplasm. Its function is as follows. Involved in mRNA export coupled transcription activation by association with both the AMEX and the SAGA complexes. The SAGA complex is a multiprotein complex that activates transcription by remodeling chromatin and mediating histone acetylation and deubiquitination. Within the SAGA complex, participates in a subcomplex that specifically deubiquitinates histone H2B. The SAGA complex is recruited to specific gene promoters by activators, where it is required for transcription. Required for nuclear receptor-mediated transactivation. Involved in transcription elongation by recruiting the THO complex onto nascent mRNA. The AMEX complex functions in docking export-competent ribonucleoprotein particles (mRNPs) to the nuclear entrance of the nuclear pore complex (nuclear basket). AMEX participates in mRNA export and accurate chromatin positioning in the nucleus by tethering genes to the nuclear periphery. The chain is Enhancer of yellow 2 transcription factor from Drosophila sechellia (Fruit fly).